The primary structure comprises 373 residues: SH3 domain-binding protein 5-like (373 aa).

The interval 1 to 36 (MEGKEGPPCEVRLPTPGAEREGPVHPELGAFGESAS) is disordered. Coiled coils occupy residues 35 to 98 (ASDA…ESAR) and 170 to 258 (WQEM…KLRY). 2 disordered regions span residues 274-308 (ARRT…PADT) and 332-373 (DLTD…SVSL). Over residues 332 to 360 (DLTDVTSLDGRETGAVESGGSRERGEDRG) the composition is skewed to basic and acidic residues.

It belongs to the SH3BP5 family.

In terms of biological role, functions as a guanine nucleotide exchange factor (GEF) for rab11a. The chain is SH3 domain-binding protein 5-like (sh3bp5l) from Xenopus laevis (African clawed frog).